A 1465-amino-acid chain; its full sequence is DNA polymerase III PolC-type (1465 aa).

The Exonuclease domain occupies 427–583 (YVVFDVETTG…YDAEATGRLL (157 aa)).

Belongs to the DNA polymerase type-C family. PolC subfamily.

Its subcellular location is the cytoplasm. The catalysed reaction is DNA(n) + a 2'-deoxyribonucleoside 5'-triphosphate = DNA(n+1) + diphosphate. In terms of biological role, required for replicative DNA synthesis. This DNA polymerase also exhibits 3' to 5' exonuclease activity. In Streptococcus pyogenes serotype M1, this protein is DNA polymerase III PolC-type.